The sequence spans 300 residues: Phospholipase A1 (300 aa).

Cysteines 4 and 87 form a disulfide. Ser137 serves as the catalytic Nucleophile. Asp165 (charge relay system) is an active-site residue. 2 disulfides stabilise this stretch: Cys176–Cys181 and Cys218–Cys227. Residue His229 is the Charge relay system of the active site. 3 cysteine pairs are disulfide-bonded: Cys244/Cys268, Cys245/Cys293, and Cys261/Cys266.

This sequence belongs to the AB hydrolase superfamily. Lipase family. In terms of tissue distribution, expressed by the venom gland.

It is found in the secreted. The catalysed reaction is a 1,2-diacyl-sn-glycero-3-phosphocholine + H2O = a 2-acyl-sn-glycero-3-phosphocholine + a fatty acid + H(+). Local inflammatory effects are inhibited by antiserotonin drugs (cyproheptadine and methysergide), indomethacin, betamethasone, and antihistamine (chlorpheniramine). Functionally, catalyzes the hydrolysis of phosphatidylcholine with phospholipase A1 activity. Shows potent hemolytic activity that is responsible for its lethal effect. May act as an allergen. In vivo, induces local inflammatory effects. This Vespa basalis (Hornet) protein is Phospholipase A1.